The sequence spans 122 residues: Large ribosomal subunit protein uL14 (122 aa).

Belongs to the universal ribosomal protein uL14 family. As to quaternary structure, part of the 50S ribosomal subunit. Forms a cluster with proteins L3 and L19. In the 70S ribosome, L14 and L19 interact and together make contacts with the 16S rRNA in bridges B5 and B8.

Functionally, binds to 23S rRNA. Forms part of two intersubunit bridges in the 70S ribosome. The protein is Large ribosomal subunit protein uL14 of Oleidesulfovibrio alaskensis (strain ATCC BAA-1058 / DSM 17464 / G20) (Desulfovibrio alaskensis).